Reading from the N-terminus, the 361-residue chain is NudC domain-containing protein 3 (361 aa).

Positions Lys87–Lys97 are enriched in basic and acidic residues. Disordered regions lie at residues Lys87 to Lys106 and Leu124 to Ala158. Ser146 carries the post-translational modification Phosphoserine. Low complexity predominate over residues Glu148 to Ala158. Residues Ala185 to Leu277 enclose the CS domain. A phosphoserine mark is found at Ser340 and Ser355.

The chain is NudC domain-containing protein 3 (NUDCD3) from Homo sapiens (Human).